A 355-amino-acid chain; its full sequence is Mu-like prophage FluMu protein gp47 (355 aa).

Belongs to the Mu gp47/PBSX XkdT family.

The chain is Mu-like prophage FluMu protein gp47 from Haemophilus influenzae (strain ATCC 51907 / DSM 11121 / KW20 / Rd).